Consider the following 142-residue polypeptide: MGGSRRRGSRHKARVRAVEILYEAEVRGVPVSEVIERRRAQTEPPINEFTEQLATRVDEHRARIDELLETYAIGWTLDRMPVVDRNILRIGVYELLWADDIPDGVAIAEAVAMAKELSTDESPVFVNGLLSRLMEKKPSLSL.

Belongs to the NusB family.

In terms of biological role, involved in transcription antitermination. Required for transcription of ribosomal RNA (rRNA) genes. Binds specifically to the boxA antiterminator sequence of the ribosomal RNA (rrn) operons. This Thermobifida fusca (strain YX) protein is Transcription antitermination protein NusB.